Reading from the N-terminus, the 204-residue chain is MAASITASVWGTLLKIHRGLTASGCLPQSCVHTSAVLERSRHWEMKNRIVYPPQLPDEPRRPAEVYHCRKQIKYSKDKMWYLAKLIRGMSVDQAIAQLEFNDKKGAKIMKEVLLEAQDLAVRNHNVEFKSNLYVAESFSNKGKYLKRIRYHGRGMFGIMDKVYCHYFVKLVEGPPSPKEEPMTGFQQAKEYVQQLRSRTITHGL.

A mitochondrion-targeting transit peptide spans 1–27 (MAASITASVWGTLLKIHRGLTASGCLP).

The protein belongs to the universal ribosomal protein uL22 family. As to quaternary structure, component of the mitochondrial ribosome large subunit (39S) which comprises a 16S rRNA and about 50 distinct proteins.

The protein resides in the mitochondrion. The protein is Large ribosomal subunit protein uL22m (mrpl22) of Xenopus tropicalis (Western clawed frog).